Consider the following 363-residue polypeptide: Sulfate/thiosulfate import ATP-binding protein CysA (363 aa).

Residues 3 to 237 (IEINNISKYF…PATRFVLEFL (235 aa)) enclose the ABC transporter domain. 35-42 (GPSGSGKT) lines the ATP pocket.

The protein belongs to the ABC transporter superfamily. Sulfate/tungstate importer (TC 3.A.1.6) family. As to quaternary structure, the complex is composed of two ATP-binding proteins (CysA), two transmembrane proteins (CysT and CysW) and a solute-binding protein (CysP).

Its subcellular location is the cell inner membrane. The catalysed reaction is sulfate(out) + ATP + H2O = sulfate(in) + ADP + phosphate + H(+). It catalyses the reaction thiosulfate(out) + ATP + H2O = thiosulfate(in) + ADP + phosphate + H(+). In terms of biological role, part of the ABC transporter complex CysAWTP involved in sulfate/thiosulfate import. Responsible for energy coupling to the transport system. This is Sulfate/thiosulfate import ATP-binding protein CysA from Yersinia pseudotuberculosis serotype I (strain IP32953).